The following is a 167-amino-acid chain: Lipoprotein signal peptidase (167 aa).

Transmembrane regions (helical) follow at residues 9–29, 68–88, and 98–118; these read AWLY…TKNL, LPLL…YALY, and MGLI…LGMV. Residues aspartate 120 and aspartate 138 contribute to the active site. The helical transmembrane segment at 130–150 threads the bilayer; sequence YWPAFNIADASISIGIALLIL.

It belongs to the peptidase A8 family.

Its subcellular location is the cell inner membrane. It catalyses the reaction Release of signal peptides from bacterial membrane prolipoproteins. Hydrolyzes -Xaa-Yaa-Zaa-|-(S,diacylglyceryl)Cys-, in which Xaa is hydrophobic (preferably Leu), and Yaa (Ala or Ser) and Zaa (Gly or Ala) have small, neutral side chains.. It functions in the pathway protein modification; lipoprotein biosynthesis (signal peptide cleavage). Functionally, this protein specifically catalyzes the removal of signal peptides from prolipoproteins. This Aquifex aeolicus (strain VF5) protein is Lipoprotein signal peptidase.